The sequence spans 489 residues: MLALYLIAGLLVGLLVYRLHLDPLSHIPGPFLAKFIPICNIRMLHTGRIVFTFRELHDTYGPVVRIGPSELSFATVTAFDSIYGFEGEKKFTIYGSRRGVVSSASGTDESLGNATSKESRRKLRPLITSTLNELMASSAEEYCHLALTEQLAAHRVGQDGSTPISLSTLNYRYLWQLANMVAFGNRGQEAHRETFNPHIRWPSPFVSFIDLLFIFCSRATIQQHARTAYKAWQAIRFVCRQTTQGPQVDFIADDSTFPDNLHRRLRQAAEKAGLDDVSDFTLLVNSMILRFSVYGTSDHMINAVFYYLLRHPQCLKRLEKEVLNAGTSVEELSDNRLAKLPYLNACINETFRISPAFNGGILQRVSCGATVDGVYVPPGVAVTVDNYTLGRSKQYWENPDAFCPERWLESSDKNVFKASRPFLIGSRQCPGRQMAYQMFRILVAKLVYLYSMELVNKDFDIERDTFCGLHWADLEVDAILKPRTDVLGY.

An N-terminal signal peptide occupies residues 1–18 (MLALYLIAGLLVGLLVYR). 3 N-linked (GlcNAc...) asparagine glycosylation sites follow: N113, N348, and N386. Heme is bound at residue C429.

It belongs to the cytochrome P450 family. It depends on heme as a cofactor.

It catalyses the reaction 2 fonsecin B + NADPH + O2 + H(+) = bifonsecin B + NADP(+) + 2 H2O. The enzyme catalyses 2 rubrofusarin B + NADPH + O2 + 3 H(+) = nigerone + NADP(+) + 2 H2O. Its pathway is secondary metabolite biosynthesis. In terms of biological role, cytochrome P450 monooxygenase; part of the gene cluster that mediates the biosynthesis of bifonsecin B, a dimeric gamma-naphthopyrone. The first step in the biosynthesis of bifonsecin B is the production of gamma-naphthopyrone precursor YWA1 by the non-reducing polyketide synthase albA, via condensation of one acetyl-CoA starter unit with 6 malonyl-CoA units. YWA1 is then methylated by bfoE at position C-6 to yield foncesin which is further methylated at position C-8 by bfoD to produce fonsecin B. A key enzyme in the biosynthetic pathway is the cytochrome P450 monooxygenase bfoB which catalyzes the oxidative dimerization of fonsecin B to bifonsecin B. Bfob also catalyzes the oxidative dimerization of rubrofusarin B into nigerone. The stereoselectivity of bfoB is influenced by the two natural monomeric substrates; homodimerization of fonsecin B yields a stereochemically pure biaryl, M-foncerine B, while rubrofusarin B yields a mixture of enantiomers M- and P-nigerone. The polypeptide is Cytochrome P450 monooxygenase bfoB (Aspergillus brasiliensis (strain CBS 101740 / IMI 381727 / IBT 21946)).